The following is a 605-amino-acid chain: Formin-binding protein 1-like (605 aa).

The 263-residue stretch at 1–263 folds into the F-BAR domain; the sequence is MSWGTELWDQ…AAKSVDERRD (263 aa). Residues 66–258 adopt a coiled-coil conformation; the sequence is FTSCIAFFNI…EGMILAAKSV (193 aa). Residues 245 to 535 are interaction with CDC42; the sequence is SKCLEGMILA…EFDDEFEDDD (291 aa). Position 295 is a phosphoserine (S295). The stretch at 392–484 forms a coiled coil; sequence LEDFSHLPPE…VEGKTGIRGD (93 aa). The REM-1 domain maps to 397 to 474; sequence HLPPEQRRKK…IHKNEAWLSE (78 aa). Residues 482–538 form a disordered region; the sequence is RGDRRHSSDINHLVTQGRESPEGSYTDDANQEVRGPPQQHGHHSEFDDEFEDDDPLP. 3 positions are modified to phosphoserine: S488, S501, and S505. The tract at residues 522 to 605 is interaction with DNM1; it reads GHHSEFDDEF…VTLEKSSKGS (84 aa). A compositionally biased stretch (acidic residues) spans 527–536; sequence FDDEFEDDDP. The region spanning 538-599 is the SH3 domain; the sequence is PAIGHCKAIY…PTTYIDVTLE (62 aa). An interaction with DNM2 and WASL region spans residues 541 to 597; sequence GHCKAIYPFDGHNEGTLAMKEGEVLYIIEEDKGDGWTRARRQNGEEGYVPTTYIDVT. The tract at residues 541–605 is interaction with DAAM1, DIAPH1 and DIAPH2; it reads GHCKAIYPFD…VTLEKSSKGS (65 aa).

Belongs to the FNBP1 family. As to quaternary structure, homodimerizes, the dimers can polymerize end-to-end to form filamentous structures. Interacts with GTP-bound CDC42. Interacts with DAAM1, DIAPH1, DIAPH2, DNM1, DNM2 and WASL/N-WASP. Interacts with ATG3. Interacts (via SH3 domain) with ABI1, WASF2, CDC42 and WIPF1.

The protein resides in the cytoplasm. It localises to the cytoskeleton. The protein localises to the cell cortex. It is found in the cytoplasmic vesicle. Its subcellular location is the cell membrane. Functionally, required to coordinate membrane tubulation with reorganization of the actin cytoskeleton during endocytosis. May bind to lipids such as phosphatidylinositol 4,5-bisphosphate and phosphatidylserine and promote membrane invagination and the formation of tubules. Also promotes CDC42-induced actin polymerization by activating the WASL-WASPIP complex, the predominant form of WASL/N-WASP in cells. Actin polymerization may promote the fission of membrane tubules to form endocytic vesicles. Essential for autophagy of intracellular bacterial pathogens. The sequence is that of Formin-binding protein 1-like (Fnbp1l) from Mus musculus (Mouse).